A 126-amino-acid chain; its full sequence is Glycine cleavage system H protein (126 aa).

One can recognise a Lipoyl-binding domain in the interval 22–104 (VAYVGITDYA…YGEGWLIKMK (83 aa)). N6-lipoyllysine is present on K63.

It belongs to the GcvH family. As to quaternary structure, the glycine cleavage system is composed of four proteins: P, T, L and H. It depends on (R)-lipoate as a cofactor.

The glycine cleavage system catalyzes the degradation of glycine. The H protein shuttles the methylamine group of glycine from the P protein to the T protein. The polypeptide is Glycine cleavage system H protein (Bacteroides fragilis (strain YCH46)).